The sequence spans 240 residues: Inhibitor of growth protein 5 (240 aa).

Residue K114 is modified to N6-acetyllysine. A disordered region spans residues 116–165 (EGSDFESSGGRGLKKGRGQKEKRGSRGRGRRTSEEDTPKKKKHKGGSEFT). The residue at position 118 (S118) is a Phosphoserine. Omega-N-methylarginine is present on R126. Residues 186-235 (PTYCLCHQVSYGEMIGCDNPDCPIEWFHFACVDLTTKPKGKWFCPRCVQE) form a PHD-type zinc finger. The Zn(2+) site is built by C189, C191, C202, C207, H213, C216, C229, and C232.

Belongs to the ING family. As to quaternary structure, component of the HBO1 complex composed of KAT7/HBO1, MEAF6, ING5, and one scaffold subunit: complexes containing BRPF scaffold (BRPF1, BRD1/BRPF2 or BRPF3) direct KAT7/HBO1 specificity towards H3K14ac, while complexes containing JADE scaffold (JADE1, JADE2 and JADE3) mediate acetylation of histone H4. Component of the MOZ/MORF complex composed at least of ING5, KAT6A, KAT6B, MEAF6 and one of BRPF1, BRD1/BRPF2 and BRPF3. Interacts with H3K4me3 and to a lesser extent with H3K4me2. Interacts with EP300 and p53/TP53. Interacts with INCA1. In terms of tissue distribution, down-regulated in bone marrow cells in acute myeloid leukemia patients as compared with normal bone marrow cells.

Its subcellular location is the nucleus. The protein resides in the chromosome. Functionally, component of the HBO1 complex, which specifically mediates acetylation of histone H3 at 'Lys-14' (H3K14ac) and, to a lower extent, acetylation of histone H4. Component of the MOZ/MORF complex which has a histone H3 acetyltransferase activity. Through chromatin acetylation it may regulate DNA replication and may function as a transcriptional coactivator. Inhibits cell growth, induces a delay in S-phase progression and enhances Fas-induced apoptosis in an INCA1-dependent manner. The sequence is that of Inhibitor of growth protein 5 (ING5) from Homo sapiens (Human).